A 620-amino-acid polypeptide reads, in one-letter code: bZIP transcription factor 49 (620 aa).

At 1-287 (MAEPVLEDTY…VAKVKKFKKV (287 aa)) the chain is on the cytoplasmic side. Positions 109–135 (SSCYNRESPTDSDFSGTSQSLSFSGQD) are enriched in polar residues. The tract at residues 109–155 (SSCYNRESPTDSDFSGTSQSLSFSGQDSAKRKTEIEEDSSDESRRLG) is disordered. Residues 172–235 (EKKKNVRLVR…VTLRQQMGTR (64 aa)) form the bZIP domain. The segment at 173–205 (KKKNVRLVRNRESAHLSRQRKKHYVEELEDKVK) is basic motif. Residues 211-218 (ISELSSKM) form a leucine-zipper region. Residues 288 to 308 (ASFSVFGFLFCMFLFGALVNI) form a helical membrane-spanning segment. The Lumenal segment spans residues 309 to 620 (SYGEYKSNYV…RPDVPHLMTS (312 aa)). Disordered regions lie at residues 343–364 (DSDQGVGRNVSETENLGPPRNS), 398–460 (ARDS…SNDQ), and 505–557 (PASP…RETK). 2 N-linked (GlcNAc...) asparagine glycosylation sites follow: N351 and N363. The span at 352 to 364 (VSETENLGPPRNS) shows a compositional bias: polar residues. Basic and acidic residues-rich tracts occupy residues 398–409 (ARDSETKNEEGK) and 432–441 (RTRDVSKHLY). Polar residues-rich tracts occupy residues 447–460 (GLSSSGSDDASNDQ) and 508–519 (PHTQQCKNTSDT). N515 is a glycosylation site (N-linked (GlcNAc...) asparagine). The short motif at 526 to 529 (RRIL) is the RRIL cleavage motif element. N-linked (GlcNAc...) asparagine glycans are attached at residues N539 and N546. A compositionally biased stretch (basic and acidic residues) spans 540–557 (LTKEDHNSSSKDKFRETK).

The protein belongs to the bZIP family. Interacts with BZIP28.

The protein resides in the endoplasmic reticulum membrane. The protein localises to the nucleus. In terms of biological role, transcriptional activator involved in stress responses. The polypeptide is bZIP transcription factor 49 (Arabidopsis thaliana (Mouse-ear cress)).